The chain runs to 85 residues: WAP four-disulfide core domain protein 12 (85 aa).

Positions 1–21 are cleaved as a signal peptide; that stretch reads MWPNSILVLMTLLISSTLVTG. The 48-residue stretch at 25 to 72 folds into the WAP domain; sequence KGEEKRVCPPDYVRCIRQDDPQCYSDNDCGDQEICCFWQCGFKCVLPV. Intrachain disulfides connect cysteine 32–cysteine 60, cysteine 39–cysteine 64, cysteine 47–cysteine 59, and cysteine 53–cysteine 68.

In terms of tissue distribution, constitutively expressed in tongue.

Its subcellular location is the secreted. Its function is as follows. Antibacterial protein which inhibits the growth of E.coli and S.aureus. Putative acid-stable proteinase inhibitor. The sequence is that of WAP four-disulfide core domain protein 12 from Mus musculus (Mouse).